A 219-amino-acid polypeptide reads, in one-letter code: Transmembrane protein 179B (219 aa).

A run of 4 helical transmembrane segments spans residues 9–29, 65–85, 96–116, and 167–187; these read VELALFAAAFLCGAVAAAAMT, FVAGASGLLALYCLLLLLFWI, GAIGLRIALAISAIAVFLVLV, and TSSWVNLVLWCVVLVLQVVQW. The interval 198–219 is disordered; sequence ERGDPEWSSETDALVGSRLSHS. 2 positions are modified to phosphoserine: Ser206 and Ser214.

The protein belongs to the TMEM179 family.

It is found in the membrane. The polypeptide is Transmembrane protein 179B (TMEM179B) (Homo sapiens (Human)).